We begin with the raw amino-acid sequence, 393 residues long: Glutamate 5-kinase (393 aa).

Lysine 17 provides a ligand contact to ATP. Residues serine 57, aspartate 144, and asparagine 156 each contribute to the substrate site. 176–177 (SD) serves as a coordination point for ATP. The PUA domain maps to 282-359 (AGSIAIDAGA…AEIAAILGYA (78 aa)). The interval 374–393 (APSGARSEEGGNEKKGKLHA) is disordered. Residues 379-393 (RSEEGGNEKKGKLHA) are compositionally biased toward basic and acidic residues.

Belongs to the glutamate 5-kinase family.

It localises to the cytoplasm. It catalyses the reaction L-glutamate + ATP = L-glutamyl 5-phosphate + ADP. The protein operates within amino-acid biosynthesis; L-proline biosynthesis; L-glutamate 5-semialdehyde from L-glutamate: step 1/2. Catalyzes the transfer of a phosphate group to glutamate to form L-glutamate 5-phosphate. The chain is Glutamate 5-kinase from Sinorhizobium fredii (strain NBRC 101917 / NGR234).